We begin with the raw amino-acid sequence, 195 residues long: Holliday junction branch migration complex subunit RuvA (195 aa).

The tract at residues 1 to 61 (MYEYFEGIIS…DTGITLYGFQ (61 aa)) is domain I. The tract at residues 62–140 (DQDDKGLFLK…DYVARLDKPE (79 aa)) is domain II. Positions 141–146 (NGEEIS) are flexible linker. Residues 146–195 (SPALNDALLALIALGYTQKEVDRITPKLVEIEADTADQYIKKGLALLLKK) form a domain III region.

This sequence belongs to the RuvA family. As to quaternary structure, homotetramer. Forms an RuvA(8)-RuvB(12)-Holliday junction (HJ) complex. HJ DNA is sandwiched between 2 RuvA tetramers; dsDNA enters through RuvA and exits via RuvB. An RuvB hexamer assembles on each DNA strand where it exits the tetramer. Each RuvB hexamer is contacted by two RuvA subunits (via domain III) on 2 adjacent RuvB subunits; this complex drives branch migration. In the full resolvosome a probable DNA-RuvA(4)-RuvB(12)-RuvC(2) complex forms which resolves the HJ.

The protein localises to the cytoplasm. In terms of biological role, the RuvA-RuvB-RuvC complex processes Holliday junction (HJ) DNA during genetic recombination and DNA repair, while the RuvA-RuvB complex plays an important role in the rescue of blocked DNA replication forks via replication fork reversal (RFR). RuvA specifically binds to HJ cruciform DNA, conferring on it an open structure. The RuvB hexamer acts as an ATP-dependent pump, pulling dsDNA into and through the RuvAB complex. HJ branch migration allows RuvC to scan DNA until it finds its consensus sequence, where it cleaves and resolves the cruciform DNA. The polypeptide is Holliday junction branch migration complex subunit RuvA (Lactobacillus acidophilus (strain ATCC 700396 / NCK56 / N2 / NCFM)).